The following is a 161-amino-acid chain: uncharacterized protein (161 aa).

The or 21 signal peptide spans 1 to 23; sequence MKKFAFLTALFAACYLPNAYAHA. Residues 129–149 traverse the membrane as a helical segment; that stretch reads IYLHDILGGIGYIVGIAGLIA.

It localises to the membrane. This is an uncharacterized protein from Haemophilus influenzae (strain ATCC 51907 / DSM 11121 / KW20 / Rd).